Reading from the N-terminus, the 459-residue chain is Glycosyl hydrolase family 109 protein (459 aa).

The tat-type signal signal peptide spans 1-31 (MHNIHRRNFLKAAGAATAGLVTANIALNAYA). NAD(+) contacts are provided by residues 64–65 (ER), Asp-86, 135–138 (WEWH), 155–156 (EV), and Asn-184. Substrate is bound by residues Tyr-213, Arg-232, 244-247 (YPTH), and Tyr-326. Tyr-244 serves as a coordination point for NAD(+).

This sequence belongs to the Gfo/Idh/MocA family. Glycosyl hydrolase 109 subfamily. The cofactor is NAD(+). In terms of processing, predicted to be exported by the Tat system. The position of the signal peptide cleavage has not been experimentally proven.

Functionally, glycosidase. This is Glycosyl hydrolase family 109 protein from Shewanella baltica (strain OS195).